We begin with the raw amino-acid sequence, 297 residues long: 2-phospho-L-lactate transferase (297 aa).

Aspartate 49 contributes to the 7,8-didemethyl-8-hydroxy-5-deazariboflavin binding site.

This sequence belongs to the CofD family. In terms of assembly, homodimer. Mg(2+) is required as a cofactor.

The enzyme catalyses (2S)-lactyl-2-diphospho-5'-guanosine + 7,8-didemethyl-8-hydroxy-5-deazariboflavin = oxidized coenzyme F420-0 + GMP + H(+). The protein operates within cofactor biosynthesis; coenzyme F420 biosynthesis. Functionally, catalyzes the transfer of the 2-phospholactate moiety from (2S)-lactyl-2-diphospho-5'-guanosine to 7,8-didemethyl-8-hydroxy-5-deazariboflavin (FO) with the formation of oxidized coenzyme F420-0 and GMP. The polypeptide is 2-phospho-L-lactate transferase (Methanospirillum hungatei JF-1 (strain ATCC 27890 / DSM 864 / NBRC 100397 / JF-1)).